Reading from the N-terminus, the 480-residue chain is 11S globulin subunit beta (480 aa).

The signal sequence occupies residues 1 to 21; sequence MARSSLFTFLCLAVFINGCLS. At glutamine 22 the chain carries Pyrrolidone carboxylic acid. 2 disulfide bridges follow: cysteine 48-cysteine 81 and cysteine 124-cysteine 303. 2 Cupin type-1 domains span residues 51 to 251 and 309 to 458; these read ENLR…GLVR and QNIG…EEAQ. Positions 408 and 468 each coordinate Mg(2+).

This sequence belongs to the 11S seed storage protein (globulins) family. As to quaternary structure, hexamer; each subunit is composed of an acidic and a basic chain derived from a single precursor and linked by a disulfide bond.

Its function is as follows. This is a seed storage protein. This chain is 11S globulin subunit beta, found in Cucurbita maxima (Pumpkin).